A 1228-amino-acid chain; its full sequence is S-layer protein (1228 aa).

An N-terminal signal peptide occupies residues 1–30 (MDRKKAVKLATASAIAASAFVAANPNASEA).

It localises to the secreted. It is found in the cell wall. The protein resides in the S-layer. The S-layer is a paracrystalline mono-layered assembly of proteins which coat the surface of bacteria. The polypeptide is S-layer protein (sbsA) (Geobacillus stearothermophilus (Bacillus stearothermophilus)).